Here is a 344-residue protein sequence, read N- to C-terminus: Phenylalanine--tRNA ligase alpha subunit (344 aa).

A Mg(2+)-binding site is contributed by glutamate 256.

It belongs to the class-II aminoacyl-tRNA synthetase family. Phe-tRNA synthetase alpha subunit type 1 subfamily. In terms of assembly, tetramer of two alpha and two beta subunits. Requires Mg(2+) as cofactor.

The protein localises to the cytoplasm. The catalysed reaction is tRNA(Phe) + L-phenylalanine + ATP = L-phenylalanyl-tRNA(Phe) + AMP + diphosphate + H(+). This chain is Phenylalanine--tRNA ligase alpha subunit (pheS), found in Bacillus subtilis (strain 168).